Consider the following 155-residue polypeptide: Protein E6 (155 aa).

2 zinc fingers span residues 39-75 (CNFC…CRCC) and 112-148 (CQNC…CRLC).

The protein belongs to the papillomaviridae E6 protein family. As to quaternary structure, forms homodimers. Interacts with ubiquitin-protein ligase UBE3A/E6-AP; this interaction stimulates UBE3A ubiquitin activity. Interacts with host BAK1.

It is found in the host cytoplasm. Its subcellular location is the host nucleus. In terms of biological role, plays a major role in the induction and maintenance of cellular transformation. E6 associates with host UBE3A/E6-AP ubiquitin-protein ligase and modulates its activity. Protects host keratinocytes from apoptosis by mediating the degradation of host BAK1. May also inhibit host immune response. This chain is Protein E6, found in Homo sapiens (Human).